A 366-amino-acid polypeptide reads, in one-letter code: Histidinol-phosphate aminotransferase (366 aa).

Lysine 231 is modified (N6-(pyridoxal phosphate)lysine).

The protein belongs to the class-II pyridoxal-phosphate-dependent aminotransferase family. Histidinol-phosphate aminotransferase subfamily. Requires pyridoxal 5'-phosphate as cofactor.

The enzyme catalyses L-histidinol phosphate + 2-oxoglutarate = 3-(imidazol-4-yl)-2-oxopropyl phosphate + L-glutamate. It functions in the pathway amino-acid biosynthesis; L-histidine biosynthesis; L-histidine from 5-phospho-alpha-D-ribose 1-diphosphate: step 7/9. This Halobacterium salinarum (strain ATCC 29341 / DSM 671 / R1) protein is Histidinol-phosphate aminotransferase.